The chain runs to 322 residues: GTP 3',8-cyclase (322 aa).

Positions 5-217 (SYGRVIDYLR…NIIAQKYSFK (213 aa)) constitute a Radical SAM core domain. R14 serves as a coordination point for GTP. Positions 21 and 25 each coordinate [4Fe-4S] cluster. Y27 is an S-adenosyl-L-methionine binding site. Position 28 (C28) interacts with [4Fe-4S] cluster. Residue R64 coordinates GTP. Position 68 (G68) interacts with S-adenosyl-L-methionine. GTP is bound at residue T95. S119 serves as a coordination point for S-adenosyl-L-methionine. GTP is bound at residue K155. Residue M189 participates in S-adenosyl-L-methionine binding. C249 and C252 together coordinate [4Fe-4S] cluster. 254–256 (RIR) is a binding site for GTP. A [4Fe-4S] cluster-binding site is contributed by C266.

This sequence belongs to the radical SAM superfamily. MoaA family. In terms of assembly, monomer and homodimer. The cofactor is [4Fe-4S] cluster.

The enzyme catalyses GTP + AH2 + S-adenosyl-L-methionine = (8S)-3',8-cyclo-7,8-dihydroguanosine 5'-triphosphate + 5'-deoxyadenosine + L-methionine + A + H(+). The protein operates within cofactor biosynthesis; molybdopterin biosynthesis. Catalyzes the cyclization of GTP to (8S)-3',8-cyclo-7,8-dihydroguanosine 5'-triphosphate. This chain is GTP 3',8-cyclase, found in Campylobacter lari (strain RM2100 / D67 / ATCC BAA-1060).